The sequence spans 728 residues: NF-kappa-B inhibitor zeta (728 aa).

Residues 45–107 (GAGDTGYLSA…PHMGVGRQQR (63 aa)) form a disordered region. The span at 53-82 (SAVPSAPGSPGSDSSDFSSTSSVSSCGAVE) shows a compositional bias: low complexity. Residues 83 to 96 (SRPRGGARAERPQV) show a composition bias toward basic and acidic residues. The 23-residue stretch at 107–129 (RGPFQGVRVKNSVKELLLHIRSN) folds into the OCA domain. The Nuclear localization signal signature appears at 163-178 (KRKGPDPLSDGPVCKR). Polar residues-rich tracts occupy residues 241–250 (PTVPQNSPRD) and 268–288 (QPFQVSGSPQMMDQASMYQYS). Positions 241-334 (PTVPQNSPRD…SQSPKYDSNL (94 aa)) are disordered. Residues 303–315 (QQQHQQNYPHNSP) are compositionally biased toward low complexity. Over residues 316–330 (LQFSPYSRMSQSPKY) the composition is skewed to polar residues. A required for transcriptional activity region spans residues 329–403 (KYDSNLFDTH…VGVHDVGSHS (75 aa)). Residues 414–728 (MGSPMNTTQL…KSIQQRAPPY (315 aa)) form an interaction with NFKB1/p50 region. ANK repeat units lie at residues 453–482 (DGDTFLHIAVAQGRRALSYVLARKMNALHM), 489–518 (NGQSAFQVAVAANQHLIVQDLVNLGAQVNT), 522–551 (WGRTPLHVCAEKGHSQVLQAIQKGAVRSNQ), 561–589 (DGLTPLHCAVVAHNAVVHELQRNRQSHSP), 591–617 (VQDLLLRNKSLVDTIKCLIQMGAAVEA), 622–651 (SGRTALHLAAEEANLELIRLFLELPSCLSF), and 658–691 (NGNTALHVAASLQYRVTQLDAVRLLMRKGADPST).

In terms of assembly, interacts with NFKB1/p50. Interacts with RELA. Interacts with AKIRIN2. As to expression, expressed in kidney, liver, lung and heart. Expressed at very low levels in skeletal muscle, spleen and brain.

It is found in the nucleus. Functionally, involved in regulation of NF-kappa-B transcription factor complexes. Inhibits NF-kappa-B activity without affecting its nuclear translocation upon stimulation. Inhibits DNA-binding of RELA and NFKB1/p50, and of the NF-kappa-B p65-p50 heterodimer and the NF-kappa-B p50-p50 homodimer. Also seems to activate NF-kappa-B-mediated transcription. In vitro, upon association with NFKB1/p50 has transcriptional activation activity and, together with NFKB1/p50 and RELA, is recruited to LCN2 promoters. Promotes transcription of LCN2 and DEFB4. Is recruited to IL-6 promoters and activates IL-6 but decreases TNF-alpha production in response to LPS. Seems to be involved in the induction of inflammatory genes activated through TLR/IL-1 receptor signaling. Involved in the induction of T helper 17 cells (Th17) differentiation upon recognition of antigen by T cell antigen receptor (TCR). This chain is NF-kappa-B inhibitor zeta (Nfkbiz), found in Mus musculus (Mouse).